The primary structure comprises 503 residues: MWLDERLLALFRRNFQSTLTYWSVFFSFGLCIAFLGPTLLDLRCQTHSSLQDITWVFFAQQFCLLVGSTLGGVFKRTVKQSLFLLFLSSLTISVVFVIIPFCDHVGVLALVMAIAGLAMGCIDTISNMQLVKIYQQDSAIFLQVLHFFVGFGALLSPLIADPFLSDTNCIQSNATQNGSRNLEHIRNSLVPHHPRNVSHYVLPLQGALVTQVSYAFWIMAAINLPVPVAVFYLIYKKGMVPGCHIQNGGLLSADELAMEMHKENDSQKIEAHEEHGHAVSLLCCQNKKIWNAPFTFFAIHMCAAVTLFMTDGIVGEYSGFVYSYAVEQPLNLAHKTAGYLPSLFWAFITLGRLISIPVSYKMAPRSMLFINLIGVTATFLFLLLSQNSTTGMFVGTALLGLWLSSVFPSMLAYTEDILNYKGCATTVLVTGAGMGEMVLQILVGSVMQTQGSYSFLVCGICLSSLAFTLYAVLLVVDSLHNRASEDSACKPPGLDGEATSYQS.

12 helical membrane-spanning segments follow: residues 19-39 (LTYWSVFFSFGLCIAFLGPTL), 53-73 (ITWVFFAQQFCLLVGSTLGGV), 82-102 (LFLLFLSSLTISVVFVIIPFC), 105-125 (VGVLALVMAIAGLAMGCIDTI), 139-159 (AIFLQVLHFFVGFGALLSPLI), 214-234 (YAFWIMAAINLPVPVAVFYLI), 289-309 (IWNAPFTFFAIHMCAAVTLFM), 338-358 (GYLPSLFWAFITLGRLISIPV), 366-386 (SMLFINLIGVTATFLFLLLSQ), 392-412 (MFVGTALLGLWLSSVFPSMLA), 427-447 (VLVTGAGMGEMVLQILVGSVM), and 455-475 (FLVCGICLSSLAFTLYAVLLV). Residues 484-503 (SEDSACKPPGLDGEATSYQS) are disordered.

It belongs to the major facilitator superfamily.

It localises to the membrane. The chain is Major facilitator superfamily domain-containing protein 4A (mfsd4a) from Xenopus tropicalis (Western clawed frog).